We begin with the raw amino-acid sequence, 1722 residues long: Lymphocyte antigen 75 (1722 aa).

The signal sequence occupies residues 1–27; the sequence is MRTGWATPRRPAGLLMLLFWFFDLAEP. Residues 28–1666 are Extracellular-facing; sequence SGRAANDPFT…VVCKVPLGPD (1639 aa). Positions 33-156 constitute a Ricin B-type lectin domain; it reads NDPFTIVHGN…ESLCDQPYHE (124 aa). Asn-135 carries an N-linked (GlcNAc...) asparagine glycan. A Fibronectin type-II domain is found at 164 to 211; sequence SYGRPCEFPFLIDGTWHHDCILDEDHSGPWCATTLNYEYDRKWGICLK. Disulfide bonds link Cys-169–Cys-194, Cys-183–Cys-209, Cys-247–Cys-340, and Cys-317–Cys-332. The C-type lectin 1 domain maps to 225 to 341; that stretch reads QFGSCYQFNT…CEAQLPYVCR (117 aa). 2 N-linked (GlcNAc...) asparagine glycosylation sites follow: Asn-345 and Asn-377. C-type lectin domains lie at 368-486, 493-625, 652-778, and 818-931; these read NNGF…YVCK, NDAS…ICKK, ASLS…IYLR, and IEGS…FICE. Cystine bridges form between Cys-389-Cys-485 and Cys-462-Cys-477. Asn-529 carries an N-linked (GlcNAc...) asparagine glycan. A disulfide bond links Cys-597 and Cys-614. 2 disulfide bridges follow: Cys-840-Cys-930 and Cys-904-Cys-922. N-linked (GlcNAc...) asparagine glycans are attached at residues Asn-843 and Asn-865. Tyr-933 carries the phosphotyrosine modification. N-linked (GlcNAc...) asparagine glycans are attached at residues Asn-934, Asn-1076, and Asn-1103. The C-type lectin 6 domain maps to 958–1091; sequence FQNKCFLKIK…ERHFVSLCQK (134 aa). Cys-1060 and Cys-1080 are disulfide-bonded. The 113-residue stretch at 1110–1222 folds into the C-type lectin 7 domain; sequence YLNNLYKIIP…DNQPGAICYY (113 aa). A disulfide bridge connects residues Cys-1197 and Cys-1211. N-linked (GlcNAc...) asparagine glycans are attached at residues Asn-1225, Asn-1320, and Asn-1392. Positions 1251–1374 constitute a C-type lectin 8 domain; sequence FQNCCYNFII…VIEEAVYFHQ (124 aa). C-type lectin domains follow at residues 1401–1513 and 1542–1661; these read YEDG…ICYK and YKGH…VCKV. A disulfide bridge connects residues Cys-1488 and Cys-1502. Asn-1593 and Asn-1626 each carry an N-linked (GlcNAc...) asparagine glycan. A disulfide bond links Cys-1635 and Cys-1650. A helical transmembrane segment spans residues 1667 to 1691; that stretch reads YTAIAIIVATLSILVLMGGLIWFLF. Over 1692-1722 the chain is Cytoplasmic; it reads QRHRLHLAGFSSVRYAQGVNEDEIMLPSFHD. Phosphoserine is present on residues Ser-1703 and Ser-1719.

In terms of processing, N-glycosylated. In terms of tissue distribution, expressed in spleen, thymus, colon and peripheral blood lymphocytes. Detected in myeloid and B-lymphoid cell lines. Isoform 2 and isoform 3 are expressed in malignant Hodgkin lymphoma cells called Hodgkin and Reed-Sternberg (HRS) cells.

The protein resides in the membrane. Acts as an endocytic receptor to direct captured antigens from the extracellular space to a specialized antigen-processing compartment. Causes reduced proliferation of B-lymphocytes. The chain is Lymphocyte antigen 75 (LY75) from Homo sapiens (Human).